The chain runs to 705 residues: Prolyl endopeptidase (705 aa).

The first 20 residues, 1–20 (MKYKKLSVAVAAFAFAAVSA), serve as a signal peptide directing secretion. Active-site charge relay system residues include Ser556 and His675.

This sequence belongs to the peptidase S9A family. In terms of assembly, monomer.

Its subcellular location is the periplasm. The catalysed reaction is Hydrolysis of Pro-|-Xaa &gt;&gt; Ala-|-Xaa in oligopeptides.. Functionally, cleaves peptide bonds on the C-terminal side of prolyl residues within peptides that are up to approximately 30 amino acids long. Has an absolute requirement for an X-Pro bond in the trans configuration immediately preceding the Pro-Y scissible bond. In Elizabethkingia miricola (Chryseobacterium miricola), this protein is Prolyl endopeptidase.